Here is a 205-residue protein sequence, read N- to C-terminus: Large ribosomal subunit protein uL3 (205 aa).

Residues 126–150 (GGPKTHGQSDRHRAPGSISSTTTPG) form a disordered region.

It belongs to the universal ribosomal protein uL3 family. Part of the 50S ribosomal subunit. Forms a cluster with proteins L14 and L19.

In terms of biological role, one of the primary rRNA binding proteins, it binds directly near the 3'-end of the 23S rRNA, where it nucleates assembly of the 50S subunit. The polypeptide is Large ribosomal subunit protein uL3 (Dehalococcoides mccartyi (strain ATCC BAA-2266 / KCTC 15142 / 195) (Dehalococcoides ethenogenes (strain 195))).